The following is a 323-amino-acid chain: tRNA-modifying protein YgfZ (323 aa).

Positions 29 and 182 each coordinate folate.

It belongs to the tRNA-modifying YgfZ family.

It localises to the cytoplasm. In terms of biological role, folate-binding protein involved in regulating the level of ATP-DnaA and in the modification of some tRNAs. It is probably a key factor in regulatory networks that act via tRNA modification, such as initiation of chromosomal replication. The chain is tRNA-modifying protein YgfZ from Vibrio cholerae serotype O1 (strain ATCC 39541 / Classical Ogawa 395 / O395).